The following is a 336-amino-acid chain: MPKTETYPRLLADIGGTNARFGLEVAPRQIECIEVLRCEDFESLSDAVRFYLSKCKESLKLHPIYGSFAVATPIMGDFVQMTNNHWTFSIETTRQCLTLKKLLVINDFVAQAYAISAMQENDLAQIGGIKCEINAPKAILGPGTGLGVSTLIQNSDGSLKVLPGEGGHVSFAPFDDLEILVWQYARSKFNHVSAERFLSGSGLVLIYEALSKRKGLEKVAKLSKAELTPQIISERALNGDYPICRLTLDTFCSMLGTLAADVALTLGARGGVYLCGGIIPRFIDYFKTSPFRARFETKGRMGAFLASIPVHVVMKKTPGLDGAGIALENYLLHDKI.

12-17 (ADIGGT) contacts ATP.

The protein belongs to the bacterial glucokinase family.

The protein resides in the cytoplasm. It catalyses the reaction D-glucose + ATP = D-glucose 6-phosphate + ADP + H(+). In Helicobacter pylori (strain P12), this protein is Glucokinase.